The sequence spans 329 residues: Porphobilinogen deaminase (329 aa).

The residue at position 253 (Cys-253) is an S-(dipyrrolylmethanemethyl)cysteine.

This sequence belongs to the HMBS family. As to quaternary structure, monomer. Requires dipyrromethane as cofactor.

The catalysed reaction is 4 porphobilinogen + H2O = hydroxymethylbilane + 4 NH4(+). Functionally, tetrapolymerization of the monopyrrole PBG into the hydroxymethylbilane pre-uroporphyrinogen in several discrete steps. In Leifsonia xyli subsp. xyli (strain CTCB07), this protein is Porphobilinogen deaminase.